The chain runs to 207 residues: Small ribosomal subunit protein uS4A (207 aa).

An S4 RNA-binding domain is found at 98–161 (RRLDNVVYRM…REHKRIKELA (64 aa)).

The protein belongs to the universal ribosomal protein uS4 family. As to quaternary structure, part of the 30S ribosomal subunit. Contacts protein S5. The interaction surface between S4 and S5 is involved in control of translational fidelity.

Functionally, one of the primary rRNA binding proteins, it binds directly to 16S rRNA where it nucleates assembly of the body of the 30S subunit. Its function is as follows. With S5 and S12 plays an important role in translational accuracy. This is Small ribosomal subunit protein uS4A from Symbiobacterium thermophilum (strain DSM 24528 / JCM 14929 / IAM 14863 / T).